The primary structure comprises 363 residues: Probable endopolygalacturonase A (363 aa).

The N-terminal stretch at 1 to 20 (MQLLQSSVIAATVGAALVAA) is a signal peptide. The propeptide occupies 21–28 (APVELEAR). Cysteines 31 and 46 form a disulfide. PbH1 repeat units follow at residues 158–187 (SDNL…DIGS), 188–209 (STYI…AINS), 210–230 (GSHI…SIGS), 239–260 (VEDV…RIKT), 268–290 (VSNV…VVEQ), and 302–347 (TNGI…SITG). N-linked (GlcNAc...) asparagine glycosylation is present at asparagine 162. Aspartate 202 functions as the Proton donor in the catalytic mechanism. A disulfide bridge connects residues cysteine 204 and cysteine 220. Residue histidine 224 is part of the active site. 2 disulfides stabilise this stretch: cysteine 330/cysteine 335 and cysteine 354/cysteine 363.

Belongs to the glycosyl hydrolase 28 family.

It is found in the secreted. The enzyme catalyses (1,4-alpha-D-galacturonosyl)n+m + H2O = (1,4-alpha-D-galacturonosyl)n + (1,4-alpha-D-galacturonosyl)m.. Involved in maceration and soft-rotting of plant tissue. Hydrolyzes the 1,4-alpha glycosidic bonds of de-esterified pectate in the smooth region of the plant cell wall. The chain is Probable endopolygalacturonase A (pgaA) from Aspergillus parasiticus.